The chain runs to 215 residues: Cytochrome b6 (215 aa).

Residues 32-52 (IFYCLGGITLTCFLVQVATGF) form a helical membrane-spanning segment. Cys-35 lines the heme c pocket. His-86 and His-100 together coordinate heme b. A run of 3 helical transmembrane segments spans residues 90 to 110 (ASMM…TGGF), 116 to 136 (LTWV…VTGY), and 186 to 206 (LHTF…FPMI). Residues His-187 and His-202 each coordinate heme b.

It belongs to the cytochrome b family. PetB subfamily. In terms of assembly, the 4 large subunits of the cytochrome b6-f complex are cytochrome b6, subunit IV (17 kDa polypeptide, PetD), cytochrome f and the Rieske protein, while the 4 small subunits are PetG, PetL, PetM and PetN. The complex functions as a dimer. Heme b is required as a cofactor. It depends on heme c as a cofactor.

It localises to the plastid. Its subcellular location is the chloroplast thylakoid membrane. Component of the cytochrome b6-f complex, which mediates electron transfer between photosystem II (PSII) and photosystem I (PSI), cyclic electron flow around PSI, and state transitions. The sequence is that of Cytochrome b6 from Saccharum hybrid (Sugarcane).